Here is a 596-residue protein sequence, read N- to C-terminus: Elongation factor 4 (596 aa).

Positions 2 to 184 (RNIRNFSIIA…AIVHRIPPPK (183 aa)) constitute a tr-type G domain. GTP-binding positions include 14 to 19 (DHGKST) and 131 to 134 (NKID).

The protein belongs to the TRAFAC class translation factor GTPase superfamily. Classic translation factor GTPase family. LepA subfamily.

Its subcellular location is the cell inner membrane. The enzyme catalyses GTP + H2O = GDP + phosphate + H(+). Required for accurate and efficient protein synthesis under certain stress conditions. May act as a fidelity factor of the translation reaction, by catalyzing a one-codon backward translocation of tRNAs on improperly translocated ribosomes. Back-translocation proceeds from a post-translocation (POST) complex to a pre-translocation (PRE) complex, thus giving elongation factor G a second chance to translocate the tRNAs correctly. Binds to ribosomes in a GTP-dependent manner. The sequence is that of Elongation factor 4 from Xanthomonas euvesicatoria pv. vesicatoria (strain 85-10) (Xanthomonas campestris pv. vesicatoria).